We begin with the raw amino-acid sequence, 340 residues long: UDP-3-O-(3-hydroxymyristoyl)glucosamine N-acyltransferase (340 aa).

The Proton acceptor role is filled by H239.

It belongs to the transferase hexapeptide repeat family. LpxD subfamily. As to quaternary structure, homotrimer.

It carries out the reaction a UDP-3-O-[(3R)-3-hydroxyacyl]-alpha-D-glucosamine + a (3R)-hydroxyacyl-[ACP] = a UDP-2-N,3-O-bis[(3R)-3-hydroxyacyl]-alpha-D-glucosamine + holo-[ACP] + H(+). The catalysed reaction is UDP-3-O-[(3R)-3-hydroxytetradecanoyl]-alpha-D-glucosamine + (3R)-hydroxytetradecanoyl-[ACP] = UDP-2-N,3-O-bis[(3R)-3-hydroxytetradecanoyl]-alpha-D-glucosamine + holo-[ACP] + H(+). Its pathway is glycolipid biosynthesis; lipid IV(A) biosynthesis; lipid IV(A) from (3R)-3-hydroxytetradecanoyl-[acyl-carrier-protein] and UDP-N-acetyl-alpha-D-glucosamine: step 3/6. Catalyzes the N-acylation of UDP-3-O-(hydroxytetradecanoyl)glucosamine using 3-hydroxytetradecanoyl-ACP as the acyl donor. Is involved in the biosynthesis of lipid A, a phosphorylated glycolipid that anchors the lipopolysaccharide to the outer membrane of the cell. The polypeptide is UDP-3-O-(3-hydroxymyristoyl)glucosamine N-acyltransferase (Yersinia pestis bv. Antiqua (strain Antiqua)).